We begin with the raw amino-acid sequence, 645 residues long: Cytochrome c oxidase subunit 1 (645 aa).

The chain crosses the membrane as a helical span at residues 8 to 28; that stretch reads LNYFYFSMWTGLSGAALATMI. E31 and G36 together coordinate Ca(2+). H54 provides a ligand contact to Fe(II)-heme a. The next 8 helical transmembrane spans lie at 56–76, 90–110, 247–267, 282–302, 337–357, 376–396, 410–430, and 438–458; these read LIMVFFVVVPIFFGGFANFLI, LNSIGFWIQPLGFLLVAKIAF, VLSVAVVLAGISTTISLLTLI, VLIPFITISLLLTLRLLAIVT, LFWFFGHPEVYILIIPSFGVA, IWAVYVMAYMGFVVWGHHMYL, ITIMICLPATIKLVNWTLTLA, and LVFLFFCSYVFFFLTGGFTGM. Position 343 (H343) interacts with Cu cation. Residues 343-347 constitute a cross-link (1'-histidyl-3'-tyrosine (His-Tyr)); the sequence is HPEVY. Y347 is an O2 binding site. Cu cation-binding residues include H392 and H393. Mg(2+)-binding residues include H470 and D471. 3 consecutive transmembrane segments (helical) span residues 475-495, 513-533, and 555-575; these read VVAHFHLMLAGAAMMGAFTGL, FLHLVYYSAGIWTTFFPMFFL, and LASCGHFLTLAGVCFFFFGIF. H478 serves as a coordination point for heme a3. H480 serves as a coordination point for Fe(II)-heme a.

The protein belongs to the heme-copper respiratory oxidase family. In terms of assembly, component of the cytochrome c oxidase (complex IV, CIV), a multisubunit enzyme composed of a catalytic core of 3 subunits and several supernumerary subunits. The complex exists as a monomer or a dimer and forms supercomplexes (SCs) in the inner mitochondrial membrane with ubiquinol-cytochrome c oxidoreductase (cytochrome b-c1 complex, complex III, CIII). It depends on heme as a cofactor. Cu cation is required as a cofactor.

The protein resides in the mitochondrion inner membrane. The catalysed reaction is 4 Fe(II)-[cytochrome c] + O2 + 8 H(+)(in) = 4 Fe(III)-[cytochrome c] + 2 H2O + 4 H(+)(out). It participates in energy metabolism; oxidative phosphorylation. Functionally, component of the cytochrome c oxidase, the last enzyme in the mitochondrial electron transport chain which drives oxidative phosphorylation. The respiratory chain contains 3 multisubunit complexes succinate dehydrogenase (complex II, CII), ubiquinol-cytochrome c oxidoreductase (cytochrome b-c1 complex, complex III, CIII) and cytochrome c oxidase (complex IV, CIV), that cooperate to transfer electrons derived from NADH and succinate to molecular oxygen, creating an electrochemical gradient over the inner membrane that drives transmembrane transport and the ATP synthase. Cytochrome c oxidase is the component of the respiratory chain that catalyzes the reduction of oxygen to water. Electrons originating from reduced cytochrome c in the intermembrane space (IMS) are transferred via the dinuclear copper A center (CU(A)) of subunit 2 and heme A of subunit 1 to the active site in subunit 1, a binuclear center (BNC) formed by heme A3 and copper B (CU(B)). The BNC reduces molecular oxygen to 2 water molecules using 4 electrons from cytochrome c in the IMS and 4 protons from the mitochondrial matrix. This Paramecium tetraurelia protein is Cytochrome c oxidase subunit 1 (COI).